Consider the following 61-residue polypeptide: MAKKSIIAKAKRKQKFAVREYNRCPLCGRPRAFIRKFGICRICFRKLASSGEVTGVTKSSW.

Cys24, Cys27, Cys40, and Cys43 together coordinate Zn(2+).

Belongs to the universal ribosomal protein uS14 family. Zinc-binding uS14 subfamily. As to quaternary structure, part of the 30S ribosomal subunit. Contacts proteins S3 and S10. Requires Zn(2+) as cofactor.

Its function is as follows. Binds 16S rRNA, required for the assembly of 30S particles and may also be responsible for determining the conformation of the 16S rRNA at the A site. The protein is Small ribosomal subunit protein uS14 of Desulfotalea psychrophila (strain LSv54 / DSM 12343).